The primary structure comprises 89 residues: Small ribosomal subunit protein uS15 (89 aa).

The disordered stretch occupies residues 1 to 23 (MTLNTQEKQKLINTHQNHGTDTG).

The protein belongs to the universal ribosomal protein uS15 family. In terms of assembly, part of the 30S ribosomal subunit. Forms a bridge to the 50S subunit in the 70S ribosome, contacting the 23S rRNA.

One of the primary rRNA binding proteins, it binds directly to 16S rRNA where it helps nucleate assembly of the platform of the 30S subunit by binding and bridging several RNA helices of the 16S rRNA. In terms of biological role, forms an intersubunit bridge (bridge B4) with the 23S rRNA of the 50S subunit in the ribosome. This chain is Small ribosomal subunit protein uS15, found in Prochlorococcus marinus (strain MIT 9211).